We begin with the raw amino-acid sequence, 375 residues long: OVARIAN TUMOR DOMAIN-containing deubiquitinating enzyme 7 (375 aa).

Positions 1–18 (MAKTKQQKSKPKKQPHQK) are enriched in basic residues. The interval 1–23 (MAKTKQQKSKPKKQPHQKQGKDC) is disordered. Residues 37–161 (LKIIQVTADG…GEHYNSVRSK (125 aa)) form the OTU domain. D45 is an active-site residue. C48 (nucleophile) is an active-site residue. The active site involves H154. The UBA-like domain maps to 202–250 (HVNAGAIKVVMSGSCCDNTEKAEQVLLQVNGDVDAAIEFLIADQGMESL). Polar residues-rich tracts occupy residues 251–264 (TEND…SDTI) and 290–305 (ASGN…CTTQ). Residues 251–306 (TENDTETASASDTINPKHASDSPMENTEQAREELIEEESASGNNSETVQAKCTTQT) are disordered. Residues 308–315 (DKKIPRNK) carry the Nuclear localization signal motif.

Belongs to the peptidase C85 family.

The protein localises to the nucleus. The catalysed reaction is Thiol-dependent hydrolysis of ester, thioester, amide, peptide and isopeptide bonds formed by the C-terminal Gly of ubiquitin (a 76-residue protein attached to proteins as an intracellular targeting signal).. Functionally, hydrolase that can remove conjugated ubiquitin from proteins in vitro and may therefore play an important regulatory role at the level of protein turnover by preventing degradation. Cysteine protease with a preference for 'Lys-63' over 'Lys-48' over 'Met-1' -linked ubiquitin (UB) tetramers as substrates. Also cleaves RUB-GST fusion. In Arabidopsis thaliana (Mouse-ear cress), this protein is OVARIAN TUMOR DOMAIN-containing deubiquitinating enzyme 7.